The chain runs to 171 residues: Protein TraV (171 aa).

An N-terminal signal peptide occupies residues 1–18 (MKQTSFFIPLLGTLLLYG). Cys19 carries the N-palmitoyl cysteine lipid modification. The S-diacylglycerol cysteine moiety is linked to residue Cys19.

It is found in the cell outer membrane. Its function is as follows. Involved in F pilus assembly. Appears to facilitate the polymerization of inner membrane-located pilin subunits into extracellular F pilus filaments. This Escherichia coli (strain K12) protein is Protein TraV (traV).